The following is a 339-amino-acid chain: Small ribosomal subunit protein mS27 (339 aa).

The N-terminal 37 residues, 1 to 37 (MGTITVVINEGPILLIRALHRATTNKKMFRSTVWRRF), are a transit peptide targeting the mitochondrion.

The protein belongs to the mitochondrion-specific ribosomal protein mS27 family. Component of the mitochondrial small ribosomal subunit (mt-SSU). Mature yeast 74S mitochondrial ribosomes consist of a small (37S) and a large (54S) subunit. The 37S small subunit contains a 15S ribosomal RNA (15S mt-rRNA) and 34 different proteins. The 54S large subunit contains a 21S rRNA (21S mt-rRNA) and 46 different proteins.

The protein resides in the mitochondrion. In terms of biological role, component of the mitochondrial ribosome (mitoribosome), a dedicated translation machinery responsible for the synthesis of mitochondrial genome-encoded proteins, including at least some of the essential transmembrane subunits of the mitochondrial respiratory chain. The mitoribosomes are attached to the mitochondrial inner membrane and translation products are cotranslationally integrated into the membrane. In Saccharomyces cerevisiae (strain ATCC 204508 / S288c) (Baker's yeast), this protein is Small ribosomal subunit protein mS27 (MRP13).